The following is a 329-amino-acid chain: Ferredoxin--NADP reductase 2 (329 aa).

The FAD site is built by T18, E37, Q45, Y50, V90, F124, D285, and S326.

This sequence belongs to the ferredoxin--NADP reductase type 2 family. Homodimer. The cofactor is FAD.

The catalysed reaction is 2 reduced [2Fe-2S]-[ferredoxin] + NADP(+) + H(+) = 2 oxidized [2Fe-2S]-[ferredoxin] + NADPH. The chain is Ferredoxin--NADP reductase 2 from Bacillus cytotoxicus (strain DSM 22905 / CIP 110041 / 391-98 / NVH 391-98).